Here is a 334-residue protein sequence, read N- to C-terminus: MQWPTLWAFSGLLCLCPSQALGQERGACPDVKVVGLGAQDKVVVIQSCPGFPGPPGPKGEPGSPAGRGERGFQGSPGKMGPAGSKGEPGTMGPPGVKGEKGDTGAAPSLGEKELGDTLCQRGPRSCKDLLTRGIFLTGWYTIHLPDCRPLTVLCDMDVDGGGWTVFQRRVDGSIDFFRDWDSYKRGFGNLGTEFWLGNDYLHLLTANGNQELRVDLQDFQGKGSYAKYSSFQVSEEQEKYKLTLGQFLEGTAGDSLTKHNNMSFTTHDQDNDANSMNCAALFHGAWWYHNCHQSNLNGRYLSGSHESYADGINWGTGQGHHYSYKVAEMKIRAS.

An N-terminal signal peptide occupies residues 1–17; sequence MQWPTLWAFSGLLCLCP. The segment at 47–117 is disordered; sequence SCPGFPGPPG…SLGEKELGDT (71 aa). The region spanning 50 to 88 is the Collagen-like domain; the sequence is GFPGPPGPKGEPGSPAGRGERGFQGSPGKMGPAGSKGEP. A Fibrinogen C-terminal domain is found at 117–334; sequence TLCQRGPRSC…KVAEMKIRAS (218 aa). Cystine bridges form between C119-C147 and C126-C154. Positions 123 to 162 are a domain; contributes to trimerization; sequence PRSCKDLLTRGIFLTGWYTIHLPDCRPLTVLCDMDVDGGG. The b domain; contributes to trimerization stretch occupies residues 163-251; sequence WTVFQRRVDG…LTLGQFLEGT (89 aa). N261 carries N-linked (GlcNAc...) asparagine glycosylation. Positions 270 and 272 each coordinate Ca(2+). A disulfide bond links C278 and C291. 290 to 292 serves as a coordination point for a carbohydrate; it reads NCH. Residues 325–334 are p domain; sequence KVAEMKIRAS.

Belongs to the ficolin lectin family. Homotrimer. Interacts with elastin/ELN. Interacts (via Fibrinogen C-terminal domain) with FFAR2. Interacts with CRP; may regulate monocyte activation by FCN1. As to expression, highly expressed in liver and spleen.

Its subcellular location is the secreted. The protein localises to the cell membrane. In terms of biological role, extracellular lectin functioning as a pattern-recognition receptor in innate immunity. Binds the sugar moieties of pathogen-associated molecular patterns (PAMPs) displayed on microbes and activates the lectin pathway of the complement system. May also activate monocytes through a G protein-coupled receptor, FFAR2, inducing the secretion of interleukin-8/IL-8. Binds preferentially to 9-O-acetylated 2-6-linked sialic acid derivatives and to various glycans containing sialic acid engaged in a 2-3 linkage. In Mus musculus (Mouse), this protein is Ficolin-1 (Fcn1).